Reading from the N-terminus, the 308-residue chain is Putative mitochondrial transporter UCP3 (308 aa).

Residues 1–10 (MVGLQPSEVP) are Mitochondrial intermembrane-facing. Residues 11–32 (PTTVVKFLGAGTAACFADLLTF) form a helical membrane-spanning segment. 3 Solcar repeats span residues 11–102 (PTTV…VKQF), 111–202 (SSVA…IKEK), and 211–296 (DNFP…LKRA). Residues 33–73 (PLDTAKVRLQIQGENPGVQSVQYRGVLGTILTMVRTEGPRS) are Mitochondrial matrix-facing. A helical membrane pass occupies residues 74-96 (PYSGLVAGLHRQMSFASIRIGLY). The Mitochondrial intermembrane portion of the chain corresponds to 97–116 (DSVKQFYTPKGTDHSSVAIR). The helical transmembrane segment at 117–133 (ILAGCTTGAMAVTCAQP) threads the bilayer. Over 134-179 (TDVVKVRFQAMIRLGTGGERKYRGTMDAYRTIAREEGVRGLWKGTW) the chain is Mitochondrial matrix. Residues 180-196 (PNITRNAIVNCAEMVTY) traverse the membrane as a helical segment. Residues 197–213 (DIIKEKLLDSHLFTDNF) are Mitochondrial intermembrane-facing. Residues 214–233 (PCHFVSAFGAGFCATVVASP) traverse the membrane as a helical segment. Residues 234-267 (VDVVKTRYMNAPPGRYRSPLHCMLRMVAQEGPTA) lie on the Mitochondrial matrix side of the membrane. The helical transmembrane segment at 268 to 290 (FYKGFMPSFLRLGSWNVMMFVTY) threads the bilayer. Residues 275 to 297 (SFLRLGSWNVMMFVTYEQLKRAL) are purine nucleotide binding. Topologically, residues 291–308 (EQLKRALMKVQVLRESPF) are mitochondrial intermembrane.

Belongs to the mitochondrial carrier (TC 2.A.29) family. As to quaternary structure, interacts with HAX1; the interaction is direct and calcium-dependent.

Its subcellular location is the mitochondrion inner membrane. Putative transmembrane transporter that plays a role in mitochondrial metabolism via an as yet unclear mechanism. Originally, this mitochondrial protein was thought to act as a proton transmembrane transporter from the mitochondrial intermembrane space into the matrix, causing proton leaks through the inner mitochondrial membrane, thereby uncoupling mitochondrial membrane potential generation from ATP synthesis. However, this function is controversial and uncoupling may not be the function, or at least not the main function, but rather a consequence of more conventional metabolite transporter activity. This is Putative mitochondrial transporter UCP3 from Rattus norvegicus (Rat).